The primary structure comprises 204 residues: Methyl-CpG-binding domain-containing protein 1 (204 aa).

Residues 1-46 (MLPFPAMNLKKSRSENSSVASSGSKIEEQTEKSAEPTTIKVQKKAG) are disordered. The segment covering 15–24 (ENSSVASSGS) has biased composition (polar residues). The segment covering 25-34 (KIEEQTEKSA) has biased composition (basic and acidic residues). A CW-type zinc finger spans residues 49-104 (GRSIDVFAVQCEKCMKWRKIDTQDEYEDIRSRVQEDPFFCKTKEGVSCEDVGDLNY). Positions 58-96 (QCEKCMKWRKIDTQDEYEDIRSRVQEDPFFCKTKEGVSC) match the MBD-associated domain (MAD) motif. Residues C59, C62, C88, and C96 each contribute to the Zn(2+) site. Residues 110–180 (WVIDKPGLPR…GDFNFTVPKV (71 aa)) form the MBD domain.

In terms of tissue distribution, mostly expressed in flowers and buds.

Its subcellular location is the nucleus. Its function is as follows. Probable transcriptional regulator. The protein is Methyl-CpG-binding domain-containing protein 1 (MBD1) of Arabidopsis thaliana (Mouse-ear cress).